We begin with the raw amino-acid sequence, 403 residues long: FAD-dependent monooxygenase tazP (403 aa).

FAD contacts are provided by G75, R144, D354, and A367.

This sequence belongs to the paxM FAD-dependent monooxygenase family. It depends on FAD as a cofactor.

It functions in the pathway secondary metabolite biosynthesis. In terms of biological role, FAD-dependent monooxygenase; part of the gene cluster that mediates the biosynthesis of azaterrilone A and other azaphilones, a class of fungal metabolites characterized by a highly oxygenated pyrano-quinone bicyclic core and exhibiting a broad range of bioactivities. The first step of the pathway begins with the non-reducing polyketide synthase tazA that assembles one acetyl-CoA starter unit, five malonyl-CoA units, and catalyzes a series of Claisen condensations, methylation, PT-mediated cyclization, and finally releases the first hexaketide precursor through the R-domain. The tazA product then undergoes reduction on its terminal ketone and the following pyran-ring formation by yet undetermined enzyme(s). Dehydration and enoyl reduction, possibly involving the trans-enoyl reductase tazE leads to the next intermediate. TazD is predicted as an acetyltransferase and might catalyze the acetylation steps leading to the synthesis of azaterrilone A. Azaterrilone A is not the final product of the taz pathway and both the highly reducing polyketide synthase tazB and the dual enzyme tazHJ catalyze late steps of the pathway, leading to the production of the 2 final stereoisomers that contain additional polyketide modification whose structures have still to be determined. This chain is FAD-dependent monooxygenase tazP, found in Aspergillus terreus (strain NIH 2624 / FGSC A1156).